The primary structure comprises 645 residues: 1-deoxy-D-xylulose-5-phosphate synthase 2 (645 aa).

Thiamine diphosphate contacts are provided by residues H79 and 120–122; that span reads GHS. D151 is a binding site for Mg(2+). Thiamine diphosphate is bound by residues 152–153, N180, Y291, and E373; that span reads GS. N180 is a Mg(2+) binding site.

It belongs to the transketolase family. DXPS subfamily. Homodimer. Requires Mg(2+) as cofactor. Thiamine diphosphate serves as cofactor.

It carries out the reaction D-glyceraldehyde 3-phosphate + pyruvate + H(+) = 1-deoxy-D-xylulose 5-phosphate + CO2. Its pathway is metabolic intermediate biosynthesis; 1-deoxy-D-xylulose 5-phosphate biosynthesis; 1-deoxy-D-xylulose 5-phosphate from D-glyceraldehyde 3-phosphate and pyruvate: step 1/1. Functionally, catalyzes the acyloin condensation reaction between C atoms 2 and 3 of pyruvate and glyceraldehyde 3-phosphate to yield 1-deoxy-D-xylulose-5-phosphate (DXP). This chain is 1-deoxy-D-xylulose-5-phosphate synthase 2, found in Rhodospirillum rubrum (strain ATCC 11170 / ATH 1.1.1 / DSM 467 / LMG 4362 / NCIMB 8255 / S1).